A 669-amino-acid chain; its full sequence is Soluble guanylate cyclase 89Db (669 aa).

H104 contacts heme. Residues 430–458 adopt a coiled-coil conformation; that stretch reads QHCSKLEIMFEKEEQRSDELEKSLELADS. The region spanning 494-620 is the Guanylate cyclase domain; sequence SVIFIEVMNI…DTVNTASRME (127 aa).

This sequence belongs to the adenylyl cyclase class-4/guanylyl cyclase family. In terms of assembly, heterodimer; with Gyc88E, in the presence of magnesium or manganese. Heme is required as a cofactor. In terms of tissue distribution, expressed in embryos in a segmental pattern in the ventral nerve cord (VNC) and in the brain, beginning at stage 13 and continuing through to stage 17. Colocalized with Gyc-89Db in several peripheral neurons that innervate trachea, basiconical sensilla and the sensory cones in the posterior segments of the embryo. Expression in wandering 3rd instar larvae is most prominent in a small cluster of cells located in the anterior medial region of each brain lobe. In the VNC, expression is found in scattered cells both laterally and at the midline.

Its subcellular location is the cytoplasm. It catalyses the reaction GTP = 3',5'-cyclic GMP + diphosphate. Probably not activated by nitric oxide (NO). Heterodimer exhibits some stimulation, compounds (SIN-1 and two of the NONOates) that were ineffective at stimulating Gyc-88E homodimer did stimulate the heterodimer. Heterodimers with Gyc88E are activated in response to changing oxygen concentrations, alerting flies to hypoxic environments. Under normal oxygen concentrations, oxygen binds to the heme group and results in low levels of guanylyl cyclase activity. When exposed to reduced oxygen concentrations, the oxygen dissociates from the heme group resulting in activation of the enzyme. The polypeptide is Soluble guanylate cyclase 89Db (Drosophila melanogaster (Fruit fly)).